The chain runs to 214 residues: uncharacterized protein (214 aa).

The signal sequence occupies residues 1 to 18; it reads MTMYIGLILVVLATFCQG. N-linked (GlcNAc...) asparagine; by host glycosylation occurs at N64.

This is an uncharacterized protein from Magallana gigas (Pacific oyster).